The primary structure comprises 703 residues: Prolyl 3-hydroxylase 2 (703 aa).

A signal peptide spans 1–21 (MRESTWVSLLLLLLLPTPQRG). Residues 17–40 (TPQRGGPQDGRRSPEPEPERGPLQ) are disordered. Basic and acidic residues predominate over residues 25-36 (DGRRSPEPEPER). TPR repeat units lie at residues 42–75 (FDLL…HRRL), 144–177 (RVPY…NPEH), 205–238 (HLES…YFNE), and 301–334 (PLHY…HPDN). N-linked (GlcNAc...) asparagine glycans are attached at residues Asn-444 and Asn-544. One can recognise a Fe2OG dioxygenase domain in the interval 552-666 (THMVCRTALS…RCAVALWFTL (115 aa)). Residues His-575, Asp-577, and His-647 each coordinate Fe cation. Arg-657 is a catalytic residue. A Prevents secretion from ER motif is present at residues 700-703 (KDEL).

This sequence belongs to the leprecan family. Fe cation is required as a cofactor. L-ascorbate serves as cofactor. In terms of tissue distribution, detected in kidney. Detected on kidney tubular cells, pancreas acinar cells, Schwann cells of the peripheral nerve in the pinna, and in tunica adventitia, the smooth muscle layer of the aortic wall (at protein level). Detected in lung, skeletal muscle and kidney. Detected in kidney glomeruli and in prehypertrophic regions of long bone from neonates. In the eye, detected in the epithelial layer of the cornea and at lower levels in the sclera at the posterior end of the eye.

The protein resides in the endoplasmic reticulum. Its subcellular location is the sarcoplasmic reticulum. It is found in the golgi apparatus. It carries out the reaction L-prolyl-[collagen] + 2-oxoglutarate + O2 = trans-3-hydroxy-L-prolyl-[collagen] + succinate + CO2. Functionally, prolyl 3-hydroxylase that catalyzes the post-translational formation of 3-hydroxyproline on collagens. Contributes to proline 3-hydroxylation of collagen COL4A1 and COL1A1 in tendons, the eye sclera and in the eye lens capsule. Has high activity with the type IV collagen COL4A1, and lower activity with COL1A1. Catalyzes hydroxylation of the first Pro in Gly-Pro-Hyp sequences where Hyp is 4-hydroxyproline. Has no activity on substrates that have proline instead of 4-hydroxyproline in the third position. The protein is Prolyl 3-hydroxylase 2 of Mus musculus (Mouse).